The primary structure comprises 375 residues: Probable sugar phosphate/phosphate translocator At3g17430 (375 aa).

10 helical membrane-spanning segments follow: residues 9–29, 43–63, 76–96, 106–126, 140–160, 163–183, 193–213, 229–249, 257–276, and 280–302; these read LVLT…VILY, LPIT…FLLI, FEIY…SLWF, VAFI…MAVV, MLLV…FNIV, VYQV…QVLL, ITSL…PWYV, WIFF…FLVI, IRVA…TVIF, and TITG…YNYI. A disordered region spans residues 328–348; that stretch reads EKKSSDKFNPNDSVEIPRVGG.

The protein belongs to the TPT transporter family. TPT (TC 2.A.7.9) subfamily.

It is found in the membrane. In Arabidopsis thaliana (Mouse-ear cress), this protein is Probable sugar phosphate/phosphate translocator At3g17430.